The chain runs to 279 residues: Acetyl-coenzyme A carboxylase carboxyl transferase subunit beta (279 aa).

The region spanning 23–279 is the CoA carboxyltransferase N-terminal domain; that stretch reads LWWKCEECGA…IVRLAGMLKV (257 aa). Residues Cys-27, Cys-30, Cys-46, and Cys-49 each coordinate Zn(2+). The C4-type zinc-finger motif lies at 27–49; sequence CEECGAMIHKKQLEDHVYTCSDC.

This sequence belongs to the AccD/PCCB family. Acetyl-CoA carboxylase is a heterohexamer composed of biotin carboxyl carrier protein (AccB), biotin carboxylase (AccC) and two subunits each of ACCase subunit alpha (AccA) and ACCase subunit beta (AccD). The cofactor is Zn(2+).

Its subcellular location is the cytoplasm. It carries out the reaction N(6)-carboxybiotinyl-L-lysyl-[protein] + acetyl-CoA = N(6)-biotinyl-L-lysyl-[protein] + malonyl-CoA. The protein operates within lipid metabolism; malonyl-CoA biosynthesis; malonyl-CoA from acetyl-CoA: step 1/1. Functionally, component of the acetyl coenzyme A carboxylase (ACC) complex. Biotin carboxylase (BC) catalyzes the carboxylation of biotin on its carrier protein (BCCP) and then the CO(2) group is transferred by the transcarboxylase to acetyl-CoA to form malonyl-CoA. The sequence is that of Acetyl-coenzyme A carboxylase carboxyl transferase subunit beta from Chlorobium limicola (strain DSM 245 / NBRC 103803 / 6330).